The following is an 88-amino-acid chain: MSLLDYFRSNKKQNTAQLAKERLQIIVAHERSSRGGPDYLPQLKQDLLDVIRKYVQIDPDKITVQLDKKSDELSVLELNITFADDKKG.

Belongs to the MinE family.

Prevents the cell division inhibition by proteins MinC and MinD at internal division sites while permitting inhibition at polar sites. This ensures cell division at the proper site by restricting the formation of a division septum at the midpoint of the long axis of the cell. This Aeromonas salmonicida (strain A449) protein is Cell division topological specificity factor.